A 395-amino-acid chain; its full sequence is Vascular endothelial growth factor A, long form (395 aa).

Disordered regions lie at residues 1–45 (MTDR…VEGV) and 73–175 (EAEP…AGPG). The segment covering 73 to 85 (EAEPSGAARSASS) has biased composition (low complexity). Residues 91 to 102 (QPEEGEEEEEKE) are compositionally biased toward acidic residues. 2 stretches are compositionally biased toward low complexity: residues 123–143 (AAVC…ARAS) and 165–175 (RRGSASRAGPG). 3 disulfides stabilise this stretch: Cys-232–Cys-274, Cys-263–Cys-308, and Cys-267–Cys-310. An N-linked (GlcNAc...) asparagine glycan is attached at Asn-281. The segment covering 314–323 (KDRARQEKKS) has biased composition (basic and acidic residues). The disordered stretch occupies residues 314–344 (KDRARQEKKSVRGKGKGQKRKRKKSRYKSWS). Basic residues predominate over residues 324-340 (VRGKGKGQKRKRKKSRY).

Belongs to the PDGF/VEGF growth factor family. In terms of assembly, homodimer; disulfide-linked. Also found as heterodimer with PGF. Interacts with NRP1. Interacts with isoform 2 of BSG. Interacts with CD82; this interaction inhibits VEGFA-mediated signaling pathway. Produced by use of an alternative upstream CUG codon and post-translationally processed into the N-terminal N-VEGF form and the C-terminal secreted VEGFA form. In terms of tissue distribution, higher expression in pituitary tumors than the pituitary gland. Widely expressed. As to expression, not widely expressed.

The protein resides in the cytoplasm. It localises to the nucleus. The protein localises to the secreted. It is found in the endoplasmic reticulum. Its subcellular location is the golgi apparatus. The protein resides in the extracellular space. It localises to the extracellular matrix. Functionally, participates in the induction of key genes involved in the response to hypoxia and in the induction of angiogenesis such as HIF1A. Involved in protecting cells from hypoxia-mediated cell death. Growth factor active in angiogenesis, vasculogenesis and endothelial cell growth. Induces endothelial cell proliferation, promotes cell migration, inhibits apoptosis and induces permeabilization of blood vessels. Binds to the FLT1/VEGFR1 and KDR/VEGFR2 receptors, heparan sulfate and heparin. Binds to the NRP1/neuropilin-1 receptor. Binding to NRP1 initiates a signaling pathway needed for motor neuron axon guidance and cell body migration, including for the caudal migration of facial motor neurons from rhombomere 4 to rhombomere 6 during embryonic development. Also binds the DEAR/FBXW7-AS1 receptor. Its function is as follows. Binds to the KDR receptor but does not activate downstream signaling pathways, does not activate angiogenesis and inhibits tumor growth. This Homo sapiens (Human) protein is Vascular endothelial growth factor A, long form (VEGFA).